A 214-amino-acid chain; its full sequence is A-type ATP synthase subunit D (214 aa).

This sequence belongs to the V-ATPase D subunit family. Has multiple subunits with at least A(3), B(3), C, D, E, F, H, I and proteolipid K(x).

The protein resides in the cell membrane. In terms of biological role, component of the A-type ATP synthase that produces ATP from ADP in the presence of a proton gradient across the membrane. This chain is A-type ATP synthase subunit D, found in Pyrococcus abyssi (strain GE5 / Orsay).